Consider the following 207-residue polypeptide: Outer-membrane lipoprotein carrier protein (207 aa).

The first 21 residues, 1-21 (MRAIRMLLVSALTLGSVTAYA), serve as a signal peptide directing secretion.

Belongs to the LolA family. In terms of assembly, monomer.

The protein localises to the periplasm. In terms of biological role, participates in the translocation of lipoproteins from the inner membrane to the outer membrane. Only forms a complex with a lipoprotein if the residue after the N-terminal Cys is not an aspartate (The Asp acts as a targeting signal to indicate that the lipoprotein should stay in the inner membrane). This is Outer-membrane lipoprotein carrier protein from Pseudomonas putida (strain ATCC 47054 / DSM 6125 / CFBP 8728 / NCIMB 11950 / KT2440).